The sequence spans 424 residues: Tol-Pal system protein TolB (424 aa).

The signal sequence occupies residues 1-24 (MNKARAIARWISFLLLIAAGQVCA).

This sequence belongs to the TolB family. As to quaternary structure, the Tol-Pal system is composed of five core proteins: the inner membrane proteins TolA, TolQ and TolR, the periplasmic protein TolB and the outer membrane protein Pal. They form a network linking the inner and outer membranes and the peptidoglycan layer.

It is found in the periplasm. Functionally, part of the Tol-Pal system, which plays a role in outer membrane invagination during cell division and is important for maintaining outer membrane integrity. The chain is Tol-Pal system protein TolB from Methylococcus capsulatus (strain ATCC 33009 / NCIMB 11132 / Bath).